Consider the following 463-residue polypeptide: Ribosomal protein uS12 methylthiotransferase RimO (463 aa).

The 116-residue stretch at 15-130 (PKVGMVSLGC…VMQVVHSHLP (116 aa)) folds into the MTTase N-terminal domain. [4Fe-4S] cluster-binding residues include cysteine 24, cysteine 60, cysteine 89, cysteine 161, cysteine 165, and cysteine 168. The 246-residue stretch at 147–392 (LTPRHYAYLK…MEVAEEVSAA (246 aa)) folds into the Radical SAM core domain. The 69-residue stretch at 395 to 463 (ERKVGKTLKV…ADGHDLWGEV (69 aa)) folds into the TRAM domain.

The protein belongs to the methylthiotransferase family. RimO subfamily. The cofactor is [4Fe-4S] cluster.

The protein localises to the cytoplasm. It catalyses the reaction L-aspartate(89)-[ribosomal protein uS12]-hydrogen + (sulfur carrier)-SH + AH2 + 2 S-adenosyl-L-methionine = 3-methylsulfanyl-L-aspartate(89)-[ribosomal protein uS12]-hydrogen + (sulfur carrier)-H + 5'-deoxyadenosine + L-methionine + A + S-adenosyl-L-homocysteine + 2 H(+). In terms of biological role, catalyzes the methylthiolation of an aspartic acid residue of ribosomal protein uS12. The sequence is that of Ribosomal protein uS12 methylthiotransferase RimO from Burkholderia thailandensis (strain ATCC 700388 / DSM 13276 / CCUG 48851 / CIP 106301 / E264).